A 132-amino-acid polypeptide reads, in one-letter code: Small ribosomal subunit protein uS8 (132 aa).

The protein belongs to the universal ribosomal protein uS8 family. In terms of assembly, part of the 30S ribosomal subunit. Contacts proteins S5 and S12.

One of the primary rRNA binding proteins, it binds directly to 16S rRNA central domain where it helps coordinate assembly of the platform of the 30S subunit. The chain is Small ribosomal subunit protein uS8 from Afipia carboxidovorans (strain ATCC 49405 / DSM 1227 / KCTC 32145 / OM5) (Oligotropha carboxidovorans).